Consider the following 378-residue polypeptide: Lactosylceramide 1,3-N-acetyl-beta-D-glucosaminyltransferase (378 aa).

The Cytoplasmic segment spans residues 1–14 (MRMLVSGRRVKKWQ). Residues 15–35 (LIIQLFATCFLASLMFFWEPI) form a helical; Signal-anchor for type II membrane protein membrane-spanning segment. The Lumenal segment spans residues 36-378 (DNHIVSHMKS…DTYPCRAAFI (343 aa)). A glycan (N-linked (GlcNAc...) asparagine) is linked at asparagine 59.

The protein belongs to the glycosyltransferase 31 family. Widely expressed. Highly expressed in lung, colon, placenta, testis, pituitary gland and cerebellum. Weakly expressed in brain, liver, spleen, lymph node and thymus.

The protein resides in the golgi apparatus membrane. It carries out the reaction a beta-D-Gal-(1-&gt;4)-beta-D-Glc-(1&lt;-&gt;1)-Cer(d18:1(4E)) + UDP-N-acetyl-alpha-D-glucosamine = a beta-D-GlcNAc-(1-&gt;3)-beta-D-Gal-(1-&gt;4)-beta-D-Glc-(1&lt;-&gt;1)-Cer(d18:1(4E)) + UDP + H(+). The catalysed reaction is a neolactoside nLc4Cer(d18:1(4E)) + UDP-N-acetyl-alpha-D-glucosamine = a neolactoside IV(3)-beta-GlcNAc-nLc4Cer(d18:1(4E)) + UDP + H(+). Its pathway is protein modification; protein glycosylation. Beta-1,3-N-acetylglucosaminyltransferase that plays a key role in the synthesis of lacto- or neolacto-series carbohydrate chains on glycolipids, notably by participating in biosynthesis of HNK-1 and Lewis X carbohydrate structures. Has strong activity toward lactosylceramide (LacCer) and neolactotetraosylceramide (nLc(4)Cer; paragloboside), resulting in the synthesis of Lc(3)Cer and neolactopentaosylceramide (nLc(5)Cer), respectively. Probably plays a central role in regulating neolacto-series glycolipid synthesis during embryonic development. The chain is Lactosylceramide 1,3-N-acetyl-beta-D-glucosaminyltransferase from Homo sapiens (Human).